The sequence spans 1047 residues: Probable alpha-mannosidase At5g66150 (1047 aa).

The N-terminal stretch at 1–27 (MEKPGMSLLKGSLCVIVFLLLLSLVES) is a signal peptide. His56, Asp58, and Asp178 together coordinate Zn(2+). Asn280, Asn287, and Asn345 each carry an N-linked (GlcNAc...) asparagine glycan. Zn(2+) is bound at residue His419. 2 disulfide bridges follow: Cys455–Cys465 and Cys476–Cys484. Asn480, Asn508, Asn541, Asn605, Asn606, Asn668, Asn780, and Asn857 each carry an N-linked (GlcNAc...) asparagine glycan. Residues Cys855 and Cys860 are joined by a disulfide bond.

Belongs to the glycosyl hydrolase 38 family. Homodimer. Requires Zn(2+) as cofactor.

The protein localises to the vacuole. It carries out the reaction Hydrolysis of terminal, non-reducing alpha-D-mannose residues in alpha-D-mannosides.. Liberates mannose from p-nitrophenyl-alpha-D-mannoside in vitro. This chain is Probable alpha-mannosidase At5g66150, found in Arabidopsis thaliana (Mouse-ear cress).